A 257-amino-acid chain; its full sequence is Neurotrophin-3 (257 aa).

An N-terminal signal peptide occupies residues 1-18; sequence MSILFYVIFLAYLRGIQG. The propeptide occupies 19–138; sequence NNMDQRSLPE…VANRTSRRKR (120 aa). A disordered region spans residues 61 to 81; sequence STLPKAEAPREPERGGPAKSA. Basic and acidic residues predominate over residues 67 to 76; that stretch reads EAPREPERGG. The N-linked (GlcNAc...) asparagine glycan is linked to N131. Disulfide bonds link C152-C217, C195-C246, and C205-C248.

This sequence belongs to the NGF-beta family. Brain and peripheral tissues.

It localises to the secreted. In terms of biological role, seems to promote the survival of visceral and proprioceptive sensory neurons. This is Neurotrophin-3 (NTF3) from Homo sapiens (Human).